Here is a 298-residue protein sequence, read N- to C-terminus: WRKY transcription factor 22 (298 aa).

Disordered stretches follow at residues 75 to 116 (EEPR…IQHK) and 181 to 220 (AEHN…TYSS). The segment covering 88–103 (SLSASSGSVTSKPSGS) has biased composition (low complexity). A compositionally biased stretch (basic residues) spans 107–116 (RSKRRKIQHK). The WRKY DNA-binding region spans 122-188 (AAEALNSDVW…YTAEHNHPAP (67 aa)). Positions 190 to 220 (HRNSLAGSTRQKPSDQQTSKSPTTTIATYSS) are enriched in polar residues.

The protein belongs to the WRKY group II-e family.

Its subcellular location is the nucleus. In terms of biological role, transcription factor involved in the expression of defense genes in innate immune response of plants. Interacts specifically with the W box (5'-(T)TGAC[CT]-3'), a frequently occurring elicitor-responsive cis-acting element. Activates WRKY 29, SIRK and its own promoters. The polypeptide is WRKY transcription factor 22 (WRKY22) (Arabidopsis thaliana (Mouse-ear cress)).